Here is a 92-residue protein sequence, read N- to C-terminus: Conotoxin Ac8.1 (92 aa).

A signal peptide spans 1–19 (LKMGAMFVLLLLFTLASSQ). The propeptide occupies 20 to 44 (QEGDVQARKTSLKSDFYRALRQYDR). Gln-45 carries the pyrrolidone carboxylic acid modification.

It belongs to the conotoxin S superfamily. Post-translationally, contains 5 disulfide bonds. Expressed by the venom duct.

The protein resides in the secreted. In Conus achatinus (Little frog cone), this protein is Conotoxin Ac8.1.